We begin with the raw amino-acid sequence, 334 residues long: G2/mitotic-specific cyclin-1 (334 aa).

This sequence belongs to the cyclin family. Cyclin AB subfamily.

In terms of biological role, essential for the control of the cell cycle at the G2/M (mitosis) transition. The polypeptide is G2/mitotic-specific cyclin-1 (CYC1) (Trypanosoma brucei brucei).